Reading from the N-terminus, the 146-residue chain is 3-hydroxyacyl-[acyl-carrier-protein] dehydratase FabZ (146 aa).

Histidine 49 is an active-site residue.

It belongs to the thioester dehydratase family. FabZ subfamily.

The protein resides in the cytoplasm. The enzyme catalyses a (3R)-hydroxyacyl-[ACP] = a (2E)-enoyl-[ACP] + H2O. Functionally, involved in unsaturated fatty acids biosynthesis. Catalyzes the dehydration of short chain beta-hydroxyacyl-ACPs and long chain saturated and unsaturated beta-hydroxyacyl-ACPs. The chain is 3-hydroxyacyl-[acyl-carrier-protein] dehydratase FabZ from Pseudomonas fluorescens (strain ATCC BAA-477 / NRRL B-23932 / Pf-5).